Here is a 1242-residue protein sequence, read N- to C-terminus: ATP-dependent RNA helicase DHX8 (1242 aa).

Disordered stretches follow at residues Arg-75–Glu-283 and Ser-354–Pro-449. Basic and acidic residues-rich tracts occupy residues Thr-87–Ser-97, Tyr-113–Met-141, and Arg-180–Ser-196. Composition is skewed to basic residues over residues Asp-197–Arg-222 and Asp-232–Ser-252. The span at Arg-253–Glu-269 shows a compositional bias: basic and acidic residues. The region spanning Gly-285–Lys-356 is the S1 motif domain. The span at Phe-388–Gly-399 shows a compositional bias: polar residues. Residues Pro-439 to Pro-449 are compositionally biased toward acidic residues. A Helicase ATP-binding domain is found at Ile-596–Pro-759. Position 609 to 616 (Gly-609 to Thr-616) interacts with ATP. The DEAH box signature appears at Asp-706–His-709. The 181-residue stretch at Tyr-777–Gly-957 folds into the Helicase C-terminal domain.

It belongs to the DEAD box helicase family. DEAH subfamily. DDX8/PRP22 sub-subfamily. Identified in the spliceosome C complex.

The protein resides in the nucleus. It carries out the reaction ATP + H2O = ADP + phosphate + H(+). Functionally, involved in pre-mRNA splicing as component of the spliceosome. Facilitates nuclear export of spliced mRNA by releasing the RNA from the spliceosome. Before and after egg-chamber formation, required for nurse-cell chromatin dispersal (NCCD) probably by playing a role in spliceosome localization to chromatin/interchromatin spaces. This is ATP-dependent RNA helicase DHX8 from Drosophila melanogaster (Fruit fly).